We begin with the raw amino-acid sequence, 402 residues long: Alanine racemase (402 aa).

Lys34 (proton acceptor; specific for D-alanine) is an active-site residue. Position 34 is an N6-(pyridoxal phosphate)lysine (Lys34). Arg133 is a binding site for substrate. An RPE1 insert domain is found at Glu226–Arg271. Tyr296 functions as the Proton acceptor; specific for L-alanine in the catalytic mechanism. Substrate is bound at residue Met344.

It belongs to the alanine racemase family. Pyridoxal 5'-phosphate serves as cofactor.

It catalyses the reaction L-alanine = D-alanine. It functions in the pathway amino-acid biosynthesis; D-alanine biosynthesis; D-alanine from L-alanine: step 1/1. Functionally, catalyzes the interconversion of L-alanine and D-alanine. May also act on other amino acids. This is Alanine racemase (alr) from Rickettsia typhi (strain ATCC VR-144 / Wilmington).